Reading from the N-terminus, the 41-residue chain is Histone H3.2 (41 aa).

A disordered region spans residues 1-41 (MARAKQTARKSTGAEAPRKQLASKAARKSAPATGGIKKPHR).

Belongs to the histone H3 family. As to quaternary structure, the nucleosome is a histone octamer containing two molecules each of H2A, H2B, H3 and H4 assembled in one H3-H4 heterotetramer and two H2A-H2B heterodimers. The octamer wraps approximately 147 bp of DNA.

It localises to the nucleus. Its subcellular location is the chromosome. Functionally, core component of nucleosome. Nucleosomes wrap and compact DNA into chromatin, limiting DNA accessibility to the cellular machineries which require DNA as a template. Histones thereby play a central role in transcription regulation, DNA repair, DNA replication and chromosomal stability. DNA accessibility is regulated via a complex set of post-translational modifications of histones, also called histone code, and nucleosome remodeling. The sequence is that of Histone H3.2 from Tetrahymena borealis.